The following is a 103-amino-acid chain: Large ribosomal subunit protein eL42 (103 aa).

The segment at G37–F56 is disordered.

It belongs to the eukaryotic ribosomal protein eL42 family.

In Dictyostelium discoideum (Social amoeba), this protein is Large ribosomal subunit protein eL42 (rpl36a).